The chain runs to 533 residues: Putative phosphate permease HP_1491 (533 aa).

12 helical membrane passes run 23–43, 47–67, 81–101, 129–149, 156–176, 182–202, 221–241, 248–268, 286–306, 338–358, 372–392, and 509–529; these read IALA…FGQA, GLLL…IGAN, AISM…GAII, VMLA…LIGA, SVVG…AVNW, IVAS…FFLM, VVPY…IVKV, LNFE…FILF, INEL…FAHG, VPLW…SLYG, LDKM…LLAS, and LVTV…LGFI.

This sequence belongs to the inorganic phosphate transporter (PiT) (TC 2.A.20) family.

It is found in the cell membrane. Potential transporter for phosphate. This is Putative phosphate permease HP_1491 from Helicobacter pylori (strain ATCC 700392 / 26695) (Campylobacter pylori).